A 447-amino-acid chain; its full sequence is Tubulin beta-2 chain (447 aa).

Residues Q11, E69, S138, G142, T143, G144, N204, and N226 each contribute to the GTP site. E69 provides a ligand contact to Mg(2+). A disordered region spans residues 427-447 (DASISEGEEEYEEEQQLENEE). Over residues 432-447 (EGEEEYEEEQQLENEE) the composition is skewed to acidic residues.

The protein belongs to the tubulin family. Dimer of alpha and beta chains. A typical microtubule is a hollow water-filled tube with an outer diameter of 25 nm and an inner diameter of 15 nM. Alpha-beta heterodimers associate head-to-tail to form protofilaments running lengthwise along the microtubule wall with the beta-tubulin subunit facing the microtubule plus end conferring a structural polarity. Microtubules usually have 13 protofilaments but different protofilament numbers can be found in some organisms and specialized cells. It depends on Mg(2+) as a cofactor.

It localises to the cytoplasm. Its subcellular location is the cytoskeleton. Tubulin is the major constituent of microtubules, a cylinder consisting of laterally associated linear protofilaments composed of alpha- and beta-tubulin heterodimers. Microtubules grow by the addition of GTP-tubulin dimers to the microtubule end, where a stabilizing cap forms. Below the cap, tubulin dimers are in GDP-bound state, owing to GTPase activity of alpha-tubulin. The chain is Tubulin beta-2 chain (TUB2) from Erysiphe pisi (Pea powdery mildew).